We begin with the raw amino-acid sequence, 308 residues long: Ribonuclease H2 subunit B (308 aa).

Position 2 is an N-acetylalanine (Ala-2). N6-acetyllysine is present on Lys-292. Ser-293 bears the Phosphoserine mark.

It belongs to the RNase H2 subunit B family. As to quaternary structure, the RNase H2 complex is a heterotrimer composed of the catalytic subunit RNASEH2A and the non-catalytic subunits RNASEH2B and RNASEH2C.

The protein resides in the nucleus. Non catalytic subunit of RNase H2, an endonuclease that specifically degrades the RNA of RNA:DNA hybrids. Participates in DNA replication, possibly by mediating the removal of lagging-strand Okazaki fragment RNA primers during DNA replication. Mediates the excision of single ribonucleotides from DNA:RNA duplexes. This is Ribonuclease H2 subunit B (Rnaseh2b) from Mus musculus (Mouse).